Consider the following 571-residue polypeptide: Wee1-like protein kinase 1-A (571 aa).

The disordered stretch occupies residues 1–101 (MSLQPVPHRL…PDCPGTPPHK (101 aa)). Over residues 81–98 (PASPPGPAASPPDCPGTP) the composition is skewed to pro residues. In terms of domain architecture, Protein kinase spans 224 to 494 (FHELEKIGSG…SMALVKHSVL (271 aa)). Residues 230-238 (IGSGEFGSV) and Lys253 contribute to the ATP site. Asp351 acts as the Proton acceptor in catalysis. Asn356 and Asp388 together coordinate Mg(2+). The stretch at 500–539 (KNAEQLRIELNAEKFKNALLQKELKKAQIAKAAAEERALF) forms a coiled coil.

This sequence belongs to the protein kinase superfamily. Ser/Thr protein kinase family. WEE1 subfamily. Zygotically expressed. Expressed in regions of the embryo that are devoid of mitotic cells, such as the involuting mesoderm.

It localises to the nucleus. It catalyses the reaction L-tyrosyl-[protein] + ATP = O-phospho-L-tyrosyl-[protein] + ADP + H(+). Its function is as follows. Acts as a zygotic negative regulator of entry into mitosis (G2 to M transition) by protecting the nucleus from cytoplasmically activated cyclin B1-complexed cdk1 before the onset of mitosis by mediating phosphorylation of cdk1 on 'Tyr-15'. Specifically phosphorylates and inactivates cyclin B1-complexed cdk1 reaching a maximum during G2 phase and a minimum as cells enter M phase. Phosphorylation of cyclin B1-cdk1 occurs exclusively on 'Tyr-15' and phosphorylation of monomeric cdk1 does not occur. Involved in convergent extension of the paraxial mesoderm during neurulation by inhibiting the cell cycle. This Xenopus laevis (African clawed frog) protein is Wee1-like protein kinase 1-A (wee1-a).